The primary structure comprises 139 residues: HTH-type transcriptional regulator MntR (139 aa).

Positions 1–63 constitute an HTH dtxR-type domain; the sequence is MPTPSMEDHI…YEKYRGLTLT (63 aa). Mn(2+)-binding residues include Asp-8, Glu-11, His-77, Glu-99, Glu-102, and His-103.

Belongs to the DtxR/MntR family. In terms of assembly, homodimer.

The protein resides in the cytoplasm. With respect to regulation, DNA binding is strongly activated by Mn(2+). In terms of biological role, central regulator of manganese homeostasis. This chain is HTH-type transcriptional regulator MntR, found in Lysinibacillus sphaericus (strain C3-41).